Consider the following 419-residue polypeptide: Adenylosuccinate synthetase (419 aa).

GTP is bound by residues 11–17 and 39–41; these read GDEGKGK and GHS. D12 functions as the Proton acceptor in the catalytic mechanism. Residues D12 and G39 each coordinate Mg(2+). Residues 12-15, 37-40, T129, R143, N221, T236, and R296 contribute to the IMP site; these read DEGK and NAGH. Catalysis depends on H40, which acts as the Proton donor. 292–298 provides a ligand contact to substrate; that stretch reads VSTGRKR. GTP contacts are provided by residues R298, 324 to 326, and 408 to 410; these read KLD and GTG.

Belongs to the adenylosuccinate synthetase family. In terms of assembly, homodimer. Mg(2+) is required as a cofactor.

Its subcellular location is the cytoplasm. It catalyses the reaction IMP + L-aspartate + GTP = N(6)-(1,2-dicarboxyethyl)-AMP + GDP + phosphate + 2 H(+). Its pathway is purine metabolism; AMP biosynthesis via de novo pathway; AMP from IMP: step 1/2. Plays an important role in the de novo pathway and in the salvage pathway of purine nucleotide biosynthesis. Catalyzes the first committed step in the biosynthesis of AMP from IMP. This chain is Adenylosuccinate synthetase, found in Chaetomium globosum (strain ATCC 6205 / CBS 148.51 / DSM 1962 / NBRC 6347 / NRRL 1970) (Soil fungus).